The primary structure comprises 67 residues: DNA-directed RNA polymerase subunit omega (67 aa).

The protein belongs to the RNA polymerase subunit omega family. In terms of assembly, the RNAP catalytic core consists of 2 alpha, 1 beta, 1 beta' and 1 omega subunit. When a sigma factor is associated with the core the holoenzyme is formed, which can initiate transcription.

It carries out the reaction RNA(n) + a ribonucleoside 5'-triphosphate = RNA(n+1) + diphosphate. Its function is as follows. Promotes RNA polymerase assembly. Latches the N- and C-terminal regions of the beta' subunit thereby facilitating its interaction with the beta and alpha subunits. The polypeptide is DNA-directed RNA polymerase subunit omega (Cupriavidus metallidurans (strain ATCC 43123 / DSM 2839 / NBRC 102507 / CH34) (Ralstonia metallidurans)).